Here is a 247-residue protein sequence, read N- to C-terminus: Probable transcriptional regulatory protein ECA2494 (247 aa).

This sequence belongs to the TACO1 family.

The protein localises to the cytoplasm. In Pectobacterium atrosepticum (strain SCRI 1043 / ATCC BAA-672) (Erwinia carotovora subsp. atroseptica), this protein is Probable transcriptional regulatory protein ECA2494.